Here is a 208-residue protein sequence, read N- to C-terminus: Protein TIC 20-II, chloroplastic (208 aa).

Residues 1–49 constitute a chloroplast transit peptide; that stretch reads MASLCLSLHQTLTNPLSAPRCRPLSLSFPGSSTFSIRPSSRRATALTTR. 4 consecutive transmembrane segments (helical) span residues 61 to 83, 101 to 121, 134 to 154, and 172 to 192; these read VISIASYALPFFNSLQYGRFLFA, LYRSVPYASFVAFFGLYLGVV, AMQAVTLDVLLAVPVLLTRIL, and TGVFVFSFMCFVYGVVSSLLG.

Belongs to the Tic20 family. As to quaternary structure, part of the Tic complex. Expressed in leaves, siliques and roots.

It is found in the plastid. The protein localises to the chloroplast inner membrane. Functionally, may be involved in protein precursor import into chloroplasts. Not redundant with TIC20-I, TIC20-IV or TIC20-V. The polypeptide is Protein TIC 20-II, chloroplastic (TIC20-II) (Arabidopsis thaliana (Mouse-ear cress)).